Here is a 490-residue protein sequence, read N- to C-terminus: Tektin-3 (490 aa).

Residues Thr-7 and Thr-9 are each glycosylated (O-linked (GalNAc...) threonine). 4 N-linked (GlcNAc...) asparagine glycosylation sites follow: Asn-41, Asn-86, Asn-111, and Asn-276. The stretch at 419-456 (RLVNEVYEVDETIQTLQQRLRDSEDTLQSLAHTKATLE) forms a coiled coil.

It belongs to the tektin family. Microtubule inner protein component of sperm flagellar doublet microtubules. Interacts with TEKT1, TEKT2, TEKT4 and TEKT5. Interacts with CCDC38. N- and O-glycosylated. Post-translationally, may be proteolytically processed during the epididymal transit of spermatozoa. In terms of processing, ubiquitinated, leading to its degradation. Deubiquitinated by USP16, promoting its stability. Expressed in epididymal sperm (at protein level).

It localises to the cytoplasm. Its subcellular location is the cytoskeleton. The protein resides in the cilium axoneme. It is found in the flagellum axoneme. The protein localises to the cytoplasmic vesicle. It localises to the secretory vesicle. Its subcellular location is the acrosome outer membrane. In terms of biological role, microtubule inner protein (MIP) part of the dynein-decorated doublet microtubules (DMTs) in cilia and flagellar axoneme. Forms filamentous polymers in the walls of ciliary and flagellar microtubules. Required for normal sperm mobility. The chain is Tektin-3 (Tekt3) from Rattus norvegicus (Rat).